We begin with the raw amino-acid sequence, 141 residues long: Putative pre-16S rRNA nuclease (141 aa).

Belongs to the YqgF nuclease family.

The protein resides in the cytoplasm. In terms of biological role, could be a nuclease involved in processing of the 5'-end of pre-16S rRNA. This chain is Putative pre-16S rRNA nuclease, found in Syntrophomonas wolfei subsp. wolfei (strain DSM 2245B / Goettingen).